Reading from the N-terminus, the 445-residue chain is Type II methyltransferase M.Bpa9945I (445 aa).

The region spanning 1-444 is the SAM-dependent MTase C5-type domain; that stretch reads MIVIDLFSGA…RAVKDVINGH (444 aa). The active site involves cysteine 136.

The protein belongs to the class I-like SAM-binding methyltransferase superfamily. C5-methyltransferase family.

The protein resides in the cytoplasm. It catalyses the reaction a 2'-deoxycytidine in DNA + S-adenosyl-L-methionine = a 5-methyl-2'-deoxycytidine in DNA + S-adenosyl-L-homocysteine + H(+). In terms of biological role, component of antiviral defense system DISARM (defense island system associated with restriction-modification), composed of DrmE, DrmA, DrmB, DrmC and DrmMII. DISARM is probably a multi-gene restriction module, this subunit is a DNA methylase. Expression of DISARM in B.subtilis (strain BEST7003) confers resistance to phages Nf, phi29, phi105, phi3T, SPO1, SPR and SPP1. Protection is over 10(7)-fold against phi3T, 10(4)-10(5)-fold against Nf, phi29, phi105 and SPR, 100-fold against SPO1 and 10-fold against SPP1. DISARM does not interfere with phage adsorption, but instead interferes with (phi3T) DNA replication early in its cycle, preventing replication, circularization and lysogeny and probably causes phage DNA degradation (DNA is degraded in SPP1-infected cells). Expression of this methylase alone leads to highly methylated phage, however they are still susceptible to the DISARM system. Functionally, a methylase, recognizes the double-stranded sequence 5'-CCWGG-3', methylates C-2 on both strands. Phage Nf does not have any 5'-CCWGG-3' motifs but is still targeted by the DISARM system. The protein is Type II methyltransferase M.Bpa9945I of Bacillus paralicheniformis (strain ATCC 9945a / NCIMB 11709 / CD-2).